We begin with the raw amino-acid sequence, 3332 residues long: Nonribosomal peptide synthetase imqB (3332 aa).

The segment at 230–622 (FSEQVKAHPG…IGRKDTQVKV (393 aa)) is adenylation 1. Residues 764–846 (GRITPQEKLL…DMARCITRVD (83 aa)) form the Carrier 1 domain. Serine 801 is subject to O-(pantetheine 4'-phosphoryl)serine. A condensation 1 region spans residues 886-1314 (DIYPCTPLQE…NCLTRKELHQ (429 aa)). The adenylation 2 stretch occupies residues 1336–1740 (EVSNTRPTAP…GRKDRQLKVR (405 aa)). The Carrier 2 domain occupies 1880-1954 (AIATPKEEKL…EMAEKAAETG (75 aa)). At serine 1915 the chain carries O-(pantetheine 4'-phosphoryl)serine. A condensation 2 region spans residues 1992–2402 (EDIYPCTPLQ…CLSEIDTQQI (411 aa)). The adenylation 3 stretch occupies residues 2422–2819 (AQQAREHPAT…GRKDTQVKIR (398 aa)). In terms of domain architecture, Carrier 3 spans 2963–3039 (EVATNDEAAV…DLASRIGRVE (77 aa)). The residue at position 3000 (serine 3000) is an O-(pantetheine 4'-phosphoryl)serine. Residues 3058–3323 (SSNPTLIQGQ…ETTRHIRDFC (266 aa)) form a thioesterase (TE) domain region.

The protein belongs to the NRP synthetase family.

Its pathway is secondary metabolite biosynthesis. Functionally, nonribosomal peptide synthetase; part of the gene cluster that mediates the biosynthesis of imizoquins A to D, tripeptide-derived alkaloids that serve a protective role against oxidative stress that are essential for normal germination. ImqB is a canonical three-module NRPS that assembles the tripeptide backbone of the imizoquins via condensation of Trp, Tyr, and Leu-derived precursors. N-methylation by imqF and phenol oxidation by imqC, followed by cyclization via the FAD-dependent oxidase imqH carry out the three-step transformation of L-tyrosine into tetrahydroisoquinoline. Importantly, this sequence requires the presence of a free amine in the tyrosine moiety, indicating that isoquinoline formation occurs prior to peptide bond formation. The imidazolidin-4-one ring of imizoquins could form following additional oxidation of the methyl-derived bridgehead carbon by imqH. Lastly, O-methylation by imqG and leucine hydroxylation by imqE complete biosynthesis of the imizoquins. The sequence is that of Nonribosomal peptide synthetase imqB from Aspergillus flavus (strain ATCC 200026 / FGSC A1120 / IAM 13836 / NRRL 3357 / JCM 12722 / SRRC 167).